We begin with the raw amino-acid sequence, 243 residues long: Calcium-binding protein LPS1-beta (243 aa).

EF-hand domains lie at 15 to 49 (EVID…DCPE), 47 to 82 (CPEE…YTKE), 85 to 120 (YSSD…ISTK), 121 to 156 (LVEG…KLPL), 157 to 189 (CFKK…NLPG), 191 to 226 (YSEE…LSKD), and 227 to 243 (DIKN…NGKI). 30 residues coordinate Ca(2+): D29, N31, D33, T35, E40, D60, N62, D64, R66, E71, D98, D100, N102, R104, E109, D134, D136, D138, H140, E145, D167, N169, D171, S173, E178, D204, N206, D208, R210, and E215.

As to expression, aboral ectoderm, a squamous epithelium covering the surface of the late stage embryo and larva.

Calcium-binding protein involved in larval development and metamorphosis. Likely to function as calcium buffers mediating the transport of calcium from the sea water to the blastocoel where calcium is required for skeleton formation. This Lytechinus pictus (Painted sea urchin) protein is Calcium-binding protein LPS1-beta.